The following is a 776-amino-acid chain: Venom dipeptidyl peptidase 4 (776 aa).

The signal sequence occupies residues 1–19; sequence MVPLRSFVLLNGLFFVLLA. 3 N-linked (GlcNAc...) asparagine glycosylation sites follow: asparagine 44, asparagine 66, and asparagine 329. Intrachain disulfides connect cysteine 449-cysteine 452 and cysteine 462-cysteine 480. 2 N-linked (GlcNAc...) asparagine glycosylation sites follow: asparagine 504 and asparagine 577. Serine 638 (charge relay system) is an active-site residue. A disulfide bridge connects residues cysteine 658 and cysteine 769. Asparagine 693 carries N-linked (GlcNAc...) asparagine glycosylation. Catalysis depends on charge relay system residues aspartate 717 and histidine 749.

It belongs to the peptidase S9B family. DPPIV subfamily. Expressed by the venom gland.

Its subcellular location is the secreted. It carries out the reaction Release of an N-terminal dipeptide, Xaa-Yaa-|-Zaa-, from a polypeptide, preferentially when Yaa is Pro, provided Zaa is neither Pro nor hydroxyproline.. Venom dipeptidyl-peptidase which removes N-terminal dipeptides sequentially from polypeptides having unsubstituted N-termini provided that the penultimate residue is proline. May process venom proteins into their active forms and/or modulate the chemotactic activity of immune cells after the insect sting. The chain is Venom dipeptidyl peptidase 4 from Vespa velutina (Asian yellow-legged hornet).